A 147-amino-acid polypeptide reads, in one-letter code: Large ribosomal subunit protein uL13 (147 aa).

The protein belongs to the universal ribosomal protein uL13 family. As to quaternary structure, part of the 50S ribosomal subunit.

This protein is one of the early assembly proteins of the 50S ribosomal subunit, although it is not seen to bind rRNA by itself. It is important during the early stages of 50S assembly. In Levilactobacillus brevis (strain ATCC 367 / BCRC 12310 / CIP 105137 / JCM 1170 / LMG 11437 / NCIMB 947 / NCTC 947) (Lactobacillus brevis), this protein is Large ribosomal subunit protein uL13.